A 149-amino-acid chain; its full sequence is Transcriptional repressor NrdR (149 aa).

Residues 3–34 (CPFCATDDTKVVDSRLTADGYQIRRRRECPVC) fold into a zinc finger. One can recognise an ATP-cone domain in the interval 49 to 139 (PHIVKNNGSR…VYLSFDDVEE (91 aa)).

It belongs to the NrdR family. Requires Zn(2+) as cofactor.

Functionally, negatively regulates transcription of bacterial ribonucleotide reductase nrd genes and operons by binding to NrdR-boxes. This is Transcriptional repressor NrdR from Glaesserella parasuis serovar 5 (strain SH0165) (Haemophilus parasuis).